Consider the following 475-residue polypeptide: Glutamyl-tRNA(Gln) amidotransferase subunit A (475 aa).

Active-site charge relay system residues include lysine 69 and serine 144. Catalysis depends on serine 168, which acts as the Acyl-ester intermediate.

Belongs to the amidase family. GatA subfamily. In terms of assembly, heterotrimer of A, B and C subunits.

It catalyses the reaction L-glutamyl-tRNA(Gln) + L-glutamine + ATP + H2O = L-glutaminyl-tRNA(Gln) + L-glutamate + ADP + phosphate + H(+). Its function is as follows. Allows the formation of correctly charged Gln-tRNA(Gln) through the transamidation of misacylated Glu-tRNA(Gln) in organisms which lack glutaminyl-tRNA synthetase. The reaction takes place in the presence of glutamine and ATP through an activated gamma-phospho-Glu-tRNA(Gln). This is Glutamyl-tRNA(Gln) amidotransferase subunit A from Methanosarcina barkeri (strain Fusaro / DSM 804).